The chain runs to 1413 residues: DNA-directed RNA polymerase subunit beta' (1413 aa).

Positions 70, 72, 85, and 88 each coordinate Zn(2+). 3 residues coordinate Mg(2+): Asp460, Asp462, and Asp464. Cys814, Cys888, Cys895, and Cys898 together coordinate Zn(2+).

It belongs to the RNA polymerase beta' chain family. In terms of assembly, the RNAP catalytic core consists of 2 alpha, 1 beta, 1 beta' and 1 omega subunit. When a sigma factor is associated with the core the holoenzyme is formed, which can initiate transcription. Mg(2+) serves as cofactor. It depends on Zn(2+) as a cofactor.

The catalysed reaction is RNA(n) + a ribonucleoside 5'-triphosphate = RNA(n+1) + diphosphate. DNA-dependent RNA polymerase catalyzes the transcription of DNA into RNA using the four ribonucleoside triphosphates as substrates. The chain is DNA-directed RNA polymerase subunit beta' from Bordetella avium (strain 197N).